A 1047-amino-acid chain; its full sequence is Carbamoyl phosphate synthase arginine-specific large chain (1047 aa).

Positions 1-401 (MPKRTDIQSV…GLQKAVRSLE (401 aa)) are carboxyphosphate synthetic domain. ATP contacts are provided by R129, R169, G175, G176, K208, I210, E215, G241, V242, H243, Q284, and E298. One can recognise an ATP-grasp 1 domain in the interval 133–327 (RQLMHELHEP…IARMAAKLSL (195 aa)). 3 residues coordinate Mg(2+): Q284, E298, and N300. Mn(2+)-binding residues include Q284, E298, and N300. The segment at 402–549 (IKTHGLSLPS…YSSWTGENDL (148 aa)) is oligomerization domain. The interval 550–933 (LLPEKAKERV…AFRKAFAWGE (384 aa)) is carbamoyl phosphate synthetic domain. In terms of domain architecture, ATP-grasp 2 spans 676–865 (YEFMRSVEVP…LITYTIDVLF (190 aa)). Residues R712, A750, E756, G781, V782, H783, S784, Q824, and E836 each coordinate ATP. Mg(2+)-binding residues include Q824, E836, and N838. Positions 824, 836, and 838 each coordinate Mn(2+). Residues 934–1047 (EQTPALFRKK…PFLLPDVVMN (114 aa)) form an allosteric domain region. One can recognise an MGS-like domain in the interval 937–1047 (PALFRKKGSV…PFLLPDVVMN (111 aa)).

It belongs to the CarB family. Composed of two chains; the small (or glutamine) chain promotes the hydrolysis of glutamine to ammonia, which is used by the large (or ammonia) chain to synthesize carbamoyl phosphate. Tetramer of heterodimers (alpha,beta)4. The cofactor is Mg(2+). It depends on Mn(2+) as a cofactor.

It catalyses the reaction hydrogencarbonate + L-glutamine + 2 ATP + H2O = carbamoyl phosphate + L-glutamate + 2 ADP + phosphate + 2 H(+). The enzyme catalyses hydrogencarbonate + NH4(+) + 2 ATP = carbamoyl phosphate + 2 ADP + phosphate + 2 H(+). The protein operates within amino-acid biosynthesis; L-arginine biosynthesis; carbamoyl phosphate from bicarbonate: step 1/1. Functionally, large subunit of the glutamine-dependent carbamoyl phosphate synthetase (CPSase). CPSase catalyzes the formation of carbamoyl phosphate from the ammonia moiety of glutamine, carbonate, and phosphate donated by ATP, constituting the first step of the biosynthetic pathway leading to arginine and/or urea. The large subunit (synthetase) binds the substrates ammonia (free or transferred from glutamine from the small subunit), hydrogencarbonate and ATP and carries out an ATP-coupled ligase reaction, activating hydrogencarbonate by forming carboxy phosphate which reacts with ammonia to form carbamoyl phosphate. In Halalkalibacterium halodurans (strain ATCC BAA-125 / DSM 18197 / FERM 7344 / JCM 9153 / C-125) (Bacillus halodurans), this protein is Carbamoyl phosphate synthase arginine-specific large chain.